Here is a 239-residue protein sequence, read N- to C-terminus: Peptidyl-tRNA hydrolase (239 aa).

Tyr-14 contributes to the tRNA binding site. Residue His-19 is the Proton acceptor of the active site. Phe-64, Asn-66, and Asn-112 together coordinate tRNA. The disordered stretch occupies residues 199 to 227 (EKPAQKGRSHIRQARPKAPPAELPSSGPM). Residues 203 to 213 (QKGRSHIRQAR) are compositionally biased toward basic residues.

Belongs to the PTH family. Monomer.

The protein resides in the cytoplasm. The enzyme catalyses an N-acyl-L-alpha-aminoacyl-tRNA + H2O = an N-acyl-L-amino acid + a tRNA + H(+). Hydrolyzes ribosome-free peptidyl-tRNAs (with 1 or more amino acids incorporated), which drop off the ribosome during protein synthesis, or as a result of ribosome stalling. In terms of biological role, catalyzes the release of premature peptidyl moieties from peptidyl-tRNA molecules trapped in stalled 50S ribosomal subunits, and thus maintains levels of free tRNAs and 50S ribosomes. This chain is Peptidyl-tRNA hydrolase, found in Chelativorans sp. (strain BNC1).